We begin with the raw amino-acid sequence, 652 residues long: tRNA 5-methylaminomethyl-2-thiouridine biosynthesis bifunctional protein MnmC (652 aa).

The tRNA (mnm(5)s(2)U34)-methyltransferase stretch occupies residues 1-235 (MPDRLVPATL…EPALRVGEYA (235 aa)). Positions 259–652 (IGAGLAGCAV…IRALRGRQIG (394 aa)) are FAD-dependent cmnm(5)s(2)U34 oxidoreductase.

In the N-terminal section; belongs to the methyltransferase superfamily. tRNA (mnm(5)s(2)U34)-methyltransferase family. It in the C-terminal section; belongs to the DAO family. It depends on FAD as a cofactor.

Its subcellular location is the cytoplasm. The catalysed reaction is 5-aminomethyl-2-thiouridine(34) in tRNA + S-adenosyl-L-methionine = 5-methylaminomethyl-2-thiouridine(34) in tRNA + S-adenosyl-L-homocysteine + H(+). Its function is as follows. Catalyzes the last two steps in the biosynthesis of 5-methylaminomethyl-2-thiouridine (mnm(5)s(2)U) at the wobble position (U34) in tRNA. Catalyzes the FAD-dependent demodification of cmnm(5)s(2)U34 to nm(5)s(2)U34, followed by the transfer of a methyl group from S-adenosyl-L-methionine to nm(5)s(2)U34, to form mnm(5)s(2)U34. The protein is tRNA 5-methylaminomethyl-2-thiouridine biosynthesis bifunctional protein MnmC of Burkholderia ambifaria (strain MC40-6).